Reading from the N-terminus, the 339-residue chain is MSEERTAWGWGLASVDAAGTTLDVWYPELNLGEAPAESDRPNHNFGTLAHDEADARGIRRVPVFVVSQLDEPISNAADAYLKLHLMSMRMAKPNTLNLDGIFAQLANVVWTNYGPFAVEDFTLRKADVERASTEAALAFASQAGLPAAAPAATVNVFGVDKFPRMIDYVVPTGVRLGDADRVRLGAYLSSGTTVMHAGFVNFNAGTLGVSMVEGRVSQGVVVGDGSDIGGGASIMGTLSGGGKLRNSIGEHSLLGANAGIGISLGDNCTVEAGLYITAGTKITIWDKAKAAAGEPLEVVKGAELSGKDNILFIRNSVNGRIEARYRKVGIELNAKLHKN.

A Mg(2+)-binding site is contributed by D180. The Acyl-anhydride intermediate role is filled by E213. Succinyl-CoA is bound by residues R215, G230, S233, A256, 271–272 (EA), G279, and K300.

Belongs to the type 2 tetrahydrodipicolinate N-succinyltransferase family. As to quaternary structure, homotrimer.

The protein resides in the cytoplasm. The catalysed reaction is (S)-2,3,4,5-tetrahydrodipicolinate + succinyl-CoA + H2O = (S)-2-succinylamino-6-oxoheptanedioate + CoA. It participates in amino-acid biosynthesis; L-lysine biosynthesis via DAP pathway; LL-2,6-diaminopimelate from (S)-tetrahydrodipicolinate (succinylase route): step 1/3. Catalyzes the conversion of the cyclic tetrahydrodipicolinate (THDP) into the acyclic N-succinyl-L-2-amino-6-oxopimelate using succinyl-CoA. The chain is 2,3,4,5-tetrahydropyridine-2,6-dicarboxylate N-succinyltransferase from Bifidobacterium longum (strain NCC 2705).